The sequence spans 134 residues: ATP synthase epsilon chain (134 aa).

Belongs to the ATPase epsilon chain family. F-type ATPases have 2 components, CF(1) - the catalytic core - and CF(0) - the membrane proton channel. CF(1) has five subunits: alpha(3), beta(3), gamma(1), delta(1), epsilon(1). CF(0) has three main subunits: a, b and c.

The protein localises to the cellular thylakoid membrane. Its function is as follows. Produces ATP from ADP in the presence of a proton gradient across the membrane. The polypeptide is ATP synthase epsilon chain (Prochlorococcus marinus (strain MIT 9312)).